Consider the following 582-residue polypeptide: Bifunctional lycopene cyclase/phytoene synthase (582 aa).

The lycopene beta-cyclase stretch occupies residues 1–261 (MNQNGTRLCY…VVLGLVGCDY (261 aa)). 6 helical membrane-spanning segments follow: residues 34–54 (CTYT…FFTA), 59–79 (KICI…SYLI), 99–121 (IPIE…YCIF), 142–162 (YVVA…LLLG), 170–190 (LILV…YPFL), and 242–262 (ALFF…CDYA). A phytoene synthase region spans residues 268–582 (YESLSQPASD…LLSALVYRLE (315 aa)).

It in the N-terminal section; belongs to the lycopene beta-cyclase family. The protein in the C-terminal section; belongs to the phytoene/squalene synthase family.

Its subcellular location is the membrane. It carries out the reaction all-trans-lycopene = gamma-carotene. The enzyme catalyses gamma-carotene = all-trans-beta-carotene. It catalyses the reaction 2 (2E,6E,10E)-geranylgeranyl diphosphate = 15-cis-phytoene + 2 diphosphate. It functions in the pathway carotenoid biosynthesis; beta-carotene biosynthesis. Its pathway is carotenoid biosynthesis; phytoene biosynthesis; all-trans-phytoene from geranylgeranyl diphosphate: step 1/1. In terms of biological role, bifunctional enzyme that catalyzes the reactions from geranylgeranyl diphosphate to phytoene (phytoene synthase) and lycopene to beta-carotene via the intermediate gamma-carotene (lycopene cyclase). In Aspergillus niger (strain ATCC MYA-4892 / CBS 513.88 / FGSC A1513), this protein is Bifunctional lycopene cyclase/phytoene synthase.